The sequence spans 120 residues: Ribosomal protein eL22-like 1 (120 aa).

Belongs to the eukaryotic ribosomal protein eL22 family.

The polypeptide is Ribosomal protein eL22-like 1 (rpl22l1) (Xenopus tropicalis (Western clawed frog)).